Consider the following 445-residue polypeptide: Ribosomal protein uS12 methylthiotransferase RimO (445 aa).

Positions 4–119 (IKVALVSLGC…LLESIKVFLK (116 aa)) constitute an MTTase N-terminal domain. [4Fe-4S] cluster contacts are provided by Cys13, Cys48, Cys82, Cys156, Cys160, and Cys163. The Radical SAM core domain occupies 142 to 372 (TTPTYTAYVR…MILQQSISKD (231 aa)). The TRAM domain occupies 375–441 (KEKIGKIYEV…EYDLIGVVYN (67 aa)).

The protein belongs to the methylthiotransferase family. RimO subfamily. Requires [4Fe-4S] cluster as cofactor.

It localises to the cytoplasm. It carries out the reaction L-aspartate(89)-[ribosomal protein uS12]-hydrogen + (sulfur carrier)-SH + AH2 + 2 S-adenosyl-L-methionine = 3-methylsulfanyl-L-aspartate(89)-[ribosomal protein uS12]-hydrogen + (sulfur carrier)-H + 5'-deoxyadenosine + L-methionine + A + S-adenosyl-L-homocysteine + 2 H(+). Functionally, catalyzes the methylthiolation of an aspartic acid residue of ribosomal protein uS12. The chain is Ribosomal protein uS12 methylthiotransferase RimO from Clostridium botulinum (strain Loch Maree / Type A3).